We begin with the raw amino-acid sequence, 362 residues long: Protein RAFTIN 1B (362 aa).

Residues Met-1 to Gly-20 form the signal peptide. The tract at residues Ser-58–Gly-94 is disordered. The span at Arg-63–Ser-86 shows a compositional bias: basic and acidic residues. N-linked (GlcNAc...) asparagine glycosylation occurs at Asn-102. Positions Phe-142–Asn-356 constitute a BURP domain.

Specifically expressed in anthers, in the tapetum and microspores (at protein level).

In terms of biological role, required for pollen development. Probably synthesized in the tapetum, packaged in Ubisch bodies and transported at appropriate stages to the micropsores. In Triticum aestivum (Wheat), this protein is Protein RAFTIN 1B (RAFTIN1B).